Consider the following 285-residue polypeptide: Nucleotide-binding protein FMG_1084 (285 aa).

8 to 15 (GMSGAGKS) is an ATP binding site. 59–62 (DIRG) contributes to the GTP binding site.

It belongs to the RapZ-like family.

Displays ATPase and GTPase activities. The polypeptide is Nucleotide-binding protein FMG_1084 (Finegoldia magna (strain ATCC 29328 / DSM 20472 / WAL 2508) (Peptostreptococcus magnus)).